A 255-amino-acid chain; its full sequence is Proteasome subunit alpha (255 aa).

Belongs to the peptidase T1A family. As to quaternary structure, the 20S proteasome core is composed of 14 alpha and 14 beta subunits that assemble into four stacked heptameric rings, resulting in a barrel-shaped structure. The two inner rings, each composed of seven catalytic beta subunits, are sandwiched by two outer rings, each composed of seven alpha subunits. The catalytic chamber with the active sites is on the inside of the barrel. Has a gated structure, the ends of the cylinder being occluded by the N-termini of the alpha-subunits. Is capped at one or both ends by the proteasome regulatory ATPase, PAN.

The protein localises to the cytoplasm. The formation of the proteasomal ATPase PAN-20S proteasome complex, via the docking of the C-termini of PAN into the intersubunit pockets in the alpha-rings, triggers opening of the gate for substrate entry. Interconversion between the open-gate and close-gate conformations leads to a dynamic regulation of the 20S proteasome proteolysis activity. Functionally, component of the proteasome core, a large protease complex with broad specificity involved in protein degradation. This is Proteasome subunit alpha from Natronomonas pharaonis (strain ATCC 35678 / DSM 2160 / CIP 103997 / JCM 8858 / NBRC 14720 / NCIMB 2260 / Gabara) (Halobacterium pharaonis).